The following is a 177-amino-acid chain: Ribosome maturation factor RimM (177 aa).

The PRC barrel domain maps to 104-176 (DGEYYFFEIL…KIIVNMPEWL (73 aa)).

It belongs to the RimM family. In terms of assembly, binds ribosomal protein uS19.

The protein localises to the cytoplasm. An accessory protein needed during the final step in the assembly of 30S ribosomal subunit, possibly for assembly of the head region. Essential for efficient processing of 16S rRNA. May be needed both before and after RbfA during the maturation of 16S rRNA. It has affinity for free ribosomal 30S subunits but not for 70S ribosomes. In Fervidobacterium nodosum (strain ATCC 35602 / DSM 5306 / Rt17-B1), this protein is Ribosome maturation factor RimM.